The primary structure comprises 69 residues: uncharacterized protein (69 aa).

This is an uncharacterized protein from Vaccinia virus (strain Western Reserve) (VACV).